We begin with the raw amino-acid sequence, 572 residues long: Urease subunit alpha (572 aa).

The region spanning 136–572 (GGIDTHIHWI…VPLAQRYFLF (437 aa)) is the Urease domain. Positions 141, 143, and 224 each coordinate Ni(2+). The residue at position 224 (K224) is an N6-carboxylysine. A substrate-binding site is contributed by H226. 2 residues coordinate Ni(2+): H253 and H279. H327 acts as the Proton donor in catalysis. Position 367 (D367) interacts with Ni(2+).

The protein belongs to the metallo-dependent hydrolases superfamily. Urease alpha subunit family. As to quaternary structure, heterotrimer of UreA (gamma), UreB (beta) and UreC (alpha) subunits. Three heterotrimers associate to form the active enzyme. Ni cation is required as a cofactor. In terms of processing, carboxylation allows a single lysine to coordinate two nickel ions.

It localises to the cytoplasm. The catalysed reaction is urea + 2 H2O + H(+) = hydrogencarbonate + 2 NH4(+). It participates in nitrogen metabolism; urea degradation; CO(2) and NH(3) from urea (urease route): step 1/1. This chain is Urease subunit alpha, found in Actinobacillus pleuropneumoniae serotype 5b (strain L20).